Here is a 662-residue protein sequence, read N- to C-terminus: UPF0313 protein CPR_1216 (662 aa).

The Radical SAM core domain maps to 296-567; it reads AIEEVKFSLV…AMQRALLQFK (272 aa). Positions 310, 314, and 317 each coordinate [4Fe-4S] cluster. Positions 597 to 662 are disordered; it reads RDKNSFGKGN…QRVSKGKKRR (66 aa). The segment covering 618 to 632 has biased composition (basic and acidic residues); that stretch reads SRNENSGRRESEDKK. Positions 633–644 are enriched in basic residues; it reads RSSHSKKQRGNK.

It belongs to the UPF0313 family. Requires [4Fe-4S] cluster as cofactor.

In Clostridium perfringens (strain SM101 / Type A), this protein is UPF0313 protein CPR_1216.